A 376-amino-acid chain; its full sequence is Thymidine kinase (376 aa).

A disordered region spans residues 1-44 (MASYPGHQHASAFDQAARSRGHSNRRTALRPRRQQEATEVRPEQ). The segment covering 19 to 32 (SRGHSNRRTALRPR) has biased composition (basic residues). The segment covering 33–44 (RQQEATEVRPEQ) has biased composition (basic and acidic residues). 56–63 (GPHGMGKT) lines the ATP pocket. Glu-83 serves as the catalytic Proton acceptor. Substrate-binding residues include Tyr-101 and Gln-125. Arg-216 provides a ligand contact to ATP. Arg-222 lines the substrate pocket. The disordered stretch occupies residues 260–280 (GQLSGTAVPPQGAEPQSNAGP).

Belongs to the herpesviridae thymidine kinase family. As to quaternary structure, homodimer.

The catalysed reaction is thymidine + ATP = dTMP + ADP + H(+). Catalyzes the transfer of the gamma-phospho group of ATP to thymidine to generate dTMP in the salvage pathway of pyrimidine synthesis. The dTMP serves as a substrate for DNA polymerase during viral DNA replication. Allows the virus to be reactivated and to grow in non-proliferative cells lacking a high concentration of phosphorylated nucleic acid precursors. The chain is Thymidine kinase from Human herpesvirus 1 (strain HFEM) (HHV-1).